We begin with the raw amino-acid sequence, 944 residues long: Probable tape measure protein (944 aa).

Positions 13–52 (RMRDEASRTLRQVRDATRALQNQTNSTSQAQERLQEQFRK) form a coiled coil.

Belongs to the P2likevirus tape measure protein family.

Serves as a base for tail tube protein polymerization and acts as a template for tail length determination. The polypeptide is Probable tape measure protein (Clostridioides difficile (Peptoclostridium difficile)).